The chain runs to 64 residues: DNA gyrase inhibitor YacG (64 aa).

Zn(2+) is bound by residues Cys7, Cys10, Cys26, and Cys30. A disordered region spans residues 44–64; that stretch reads RIPGEIDPELLPYPEEGEQWQ.

The protein belongs to the DNA gyrase inhibitor YacG family. Interacts with GyrB. Requires Zn(2+) as cofactor.

In terms of biological role, inhibits all the catalytic activities of DNA gyrase by preventing its interaction with DNA. Acts by binding directly to the C-terminal domain of GyrB, which probably disrupts DNA binding by the gyrase. The polypeptide is DNA gyrase inhibitor YacG (Aeromonas hydrophila subsp. hydrophila (strain ATCC 7966 / DSM 30187 / BCRC 13018 / CCUG 14551 / JCM 1027 / KCTC 2358 / NCIMB 9240 / NCTC 8049)).